We begin with the raw amino-acid sequence, 220 residues long: Probable acrEF/envCD operon repressor (220 aa).

One can recognise an HTH tetR-type domain in the interval 10-70 (LKTRQELIET…EMWLQQPSLR (61 aa)). Residues 33-52 (TLNDIADAANVTRGAIYWHF) constitute a DNA-binding region (H-T-H motif).

Functionally, potential regulator protein for the acrEF/envCD genes. This chain is Probable acrEF/envCD operon repressor (envR), found in Escherichia coli O157:H7.